A 465-amino-acid polypeptide reads, in one-letter code: Pre-mRNA-splicing factor URN1 (465 aa).

One can recognise a WW domain in the interval 1-32 (MRGEWQEFKTPAGKKYYYNKNTKQSRWEKPNL). 3 disordered regions span residues 28–49 (EKPNLKKGSNLESNAKESQTER), 144–198 (ERKD…VNQD), and 266–288 (ERSGNATAEESDSEDNSEDDSEV). Position 150 is a phosphoserine (Ser-150). The span at 160 to 175 (LQESHTGLVSGYGSSS) shows a compositional bias: polar residues. Residues 176–192 (GEEDEEEDEEEDEENEE) are compositionally biased toward acidic residues. An FF domain is found at 212–266 (DIDERNIFFELFDRYKLDKFSTWSLQSKKIENDPDFYKIRDDTVRESLFEEWCGE). Residues 274 to 288 (EESDSEDNSEDDSEV) show a composition bias toward acidic residues.

Component of the precatalytic spliceosomal complex B. Interacts with PRP19.

The protein resides in the nucleus. Component of the spliceosome involved in mRNA processing. The sequence is that of Pre-mRNA-splicing factor URN1 (URN1) from Saccharomyces cerevisiae (strain ATCC 204508 / S288c) (Baker's yeast).